The sequence spans 67 residues: Large ribosomal subunit protein uL29 (67 aa).

It belongs to the universal ribosomal protein uL29 family.

This Wolbachia pipientis wMel protein is Large ribosomal subunit protein uL29.